A 365-amino-acid chain; its full sequence is AP2/ERF and B3 domain-containing protein Os01g0141000 (365 aa).

The disordered stretch occupies residues methionine 1 to valine 24. Residues arginine 68–proline 123 constitute a DNA-binding region (AP2/ERF). Residues phenylalanine 182–asparagine 294 constitute a DNA-binding region (TF-B3).

The protein localises to the nucleus. This chain is AP2/ERF and B3 domain-containing protein Os01g0141000, found in Oryza sativa subsp. japonica (Rice).